Reading from the N-terminus, the 130-residue chain is Organic solute transporter subunit beta (130 aa).

Residues 1-35 (MNYSEKLTGAPPMTEVPLELLEEMLWFFRVEDATP) are Extracellular-facing. A helical membrane pass occupies residues 36–56 (WNCSMFVLAALVAIISFILLG). Residues 57 to 130 (RNIQANRNQK…HLPDPQEPES (74 aa)) lie on the Cytoplasmic side of the membrane. The disordered stretch occupies residues 99–130 (LSEKPTLAQGEMEAKCSDVPRVHLPDPQEPES). Over residues 110–124 (MEAKCSDVPRVHLPD) the composition is skewed to basic and acidic residues.

It belongs to the OST-beta family. Interacts with SLC51A. The Ost-alpha/Ost-beta complex is a heterodimer composed of alpha (SLC51A) and beta (SLC51B) subunit; induces the transport of SLC51A from the endoplasmic reticulum to the plasma membrane.

The protein localises to the cell membrane. It carries out the reaction taurocholate(out) = taurocholate(in). The enzyme catalyses estrone 3-sulfate(out) = estrone 3-sulfate(in). It catalyses the reaction dehydroepiandrosterone 3-sulfate(out) = dehydroepiandrosterone 3-sulfate(in). The catalysed reaction is tauroursodeoxycholate(out) = tauroursodeoxycholate(in). It carries out the reaction glycoursodeoxycholate(out) = glycoursodeoxycholate(in). The enzyme catalyses glycocholate(out) = glycocholate(in). It catalyses the reaction taurochenodeoxycholate(out) = taurochenodeoxycholate(in). The catalysed reaction is glycochenodeoxycholate(out) = glycochenodeoxycholate(in). It carries out the reaction taurodeoxycholate(out) = taurodeoxycholate(in). The enzyme catalyses glycodeoxycholate(out) = glycodeoxycholate(in). It catalyses the reaction prostaglandin E2(out) = prostaglandin E2(in). Its function is as follows. Essential component of the Ost-alpha/Ost-beta complex, a heterodimer that acts as the intestinal basolateral transporter responsible for bile acid export from enterocytes into portal blood. The Ost-alpha/Ost-beta complex efficiently transports the major species of bile acids (taurocholate). Taurine conjugates are transported more efficiently across the basolateral membrane than glycine-conjugated bile acids. Can also transport steroids such as estrone 3-sulfate and dehydroepiandrosterone 3-sulfate, therefore playing a role in the enterohepatic circulation of sterols. Able to transport eicosanoids such as prostaglandin E2. Modulates SLC51A glycosylation, membrane trafficking and stability activities. This Bos taurus (Bovine) protein is Organic solute transporter subunit beta (SLC51B).